The chain runs to 98 residues: UPF0213 protein in ldhD 5'region (98 aa).

One can recognise a GIY-YIG domain in the interval N7 to K84.

It belongs to the UPF0213 family.

This chain is UPF0213 protein in ldhD 5'region, found in Pediococcus acidilactici.